Consider the following 183-residue polypeptide: Large ribosomal subunit protein uL6 (183 aa).

It belongs to the universal ribosomal protein uL6 family. In terms of assembly, part of the 50S ribosomal subunit.

In terms of biological role, this protein binds to the 23S rRNA, and is important in its secondary structure. It is located near the subunit interface in the base of the L7/L12 stalk, and near the tRNA binding site of the peptidyltransferase center. The chain is Large ribosomal subunit protein uL6 from Parabacteroides distasonis (strain ATCC 8503 / DSM 20701 / CIP 104284 / JCM 5825 / NCTC 11152).